The sequence spans 451 residues: SH2 domain-containing protein 7 (451 aa).

An SH2 domain is found at 51–142; that stretch reads WFHGFITRKQ…PFKEMLTAAC (92 aa). Disordered regions lie at residues 180-232, 256-321, and 408-436; these read KAAS…SLLE, LGTE…SDAM, and GTPE…THKP. Residues 221–232 are compositionally biased toward low complexity; it reads SPLPEKSSSLLE. Residues 279 to 291 show a composition bias toward basic and acidic residues; it reads EAQRRLSDGEQNR. The segment covering 306-316 has biased composition (polar residues); it reads QGPTESPTSWG. Basic and acidic residues predominate over residues 426 to 436; sequence KSKETGRTHKP.

This is SH2 domain-containing protein 7 (SH2D7) from Homo sapiens (Human).